The chain runs to 348 residues: Phosphoribosylformylglycinamidine cyclo-ligase (348 aa).

The protein belongs to the AIR synthase family.

It is found in the cytoplasm. It catalyses the reaction 2-formamido-N(1)-(5-O-phospho-beta-D-ribosyl)acetamidine + ATP = 5-amino-1-(5-phospho-beta-D-ribosyl)imidazole + ADP + phosphate + H(+). It functions in the pathway purine metabolism; IMP biosynthesis via de novo pathway; 5-amino-1-(5-phospho-D-ribosyl)imidazole from N(2)-formyl-N(1)-(5-phospho-D-ribosyl)glycinamide: step 2/2. The chain is Phosphoribosylformylglycinamidine cyclo-ligase from Citrifermentans bemidjiense (strain ATCC BAA-1014 / DSM 16622 / JCM 12645 / Bem) (Geobacter bemidjiensis).